The sequence spans 540 residues: IQ motif and ankyrin repeat domain-containing protein 1 (540 aa).

Residues 1 to 17 (MSTKKGGPKAASGKGQA) show a composition bias toward low complexity. Residues 1 to 62 (MSTKKGGPKA…PQAPAAPTAE (62 aa)) form a disordered region. One can recognise an IQ domain in the interval 62–91 (EDKAAIVIQCAFRQYLARRELARRCQERQE). 2 ANK repeats span residues 191-220 (HGNT…NPNT) and 224-253 (FGRT…DPRM). Positions 281-388 (LTEAMLKNME…EETLAMARLE (108 aa)) form a coiled coil.

This chain is IQ motif and ankyrin repeat domain-containing protein 1, found in Mus musculus (Mouse).